A 332-amino-acid chain; its full sequence is Ribosomal RNA small subunit methyltransferase H (332 aa).

S-adenosyl-L-methionine-binding positions include 36–38 (GGH), Asp-61, Phe-88, Asp-114, and Gln-121.

The protein belongs to the methyltransferase superfamily. RsmH family.

Its subcellular location is the cytoplasm. It catalyses the reaction cytidine(1402) in 16S rRNA + S-adenosyl-L-methionine = N(4)-methylcytidine(1402) in 16S rRNA + S-adenosyl-L-homocysteine + H(+). Specifically methylates the N4 position of cytidine in position 1402 (C1402) of 16S rRNA. The polypeptide is Ribosomal RNA small subunit methyltransferase H (Pelodictyon phaeoclathratiforme (strain DSM 5477 / BU-1)).